Here is a 348-residue protein sequence, read N- to C-terminus: Selenide, water dikinase (348 aa).

Cysteine 17 is a catalytic residue. Residues lysine 20 and 47–49 (THD) contribute to the ATP site. Position 50 (aspartate 50) interacts with Mg(2+). ATP contacts are provided by residues aspartate 67, aspartate 90, and 138–140 (GHT). Aspartate 90 contacts Mg(2+). Residue aspartate 226 participates in Mg(2+) binding.

Belongs to the selenophosphate synthase 1 family. Class I subfamily. In terms of assembly, homodimer. Mg(2+) serves as cofactor.

The enzyme catalyses hydrogenselenide + ATP + H2O = selenophosphate + AMP + phosphate + 2 H(+). Functionally, synthesizes selenophosphate from selenide and ATP. This chain is Selenide, water dikinase, found in Porphyromonas gingivalis (strain ATCC BAA-308 / W83).